The following is a 1368-amino-acid chain: DNA-directed RNA polymerase subunit beta (1368 aa).

The protein belongs to the RNA polymerase beta chain family. The RNAP catalytic core consists of 2 alpha, 1 beta, 1 beta' and 1 omega subunit. When a sigma factor is associated with the core the holoenzyme is formed, which can initiate transcription.

It catalyses the reaction RNA(n) + a ribonucleoside 5'-triphosphate = RNA(n+1) + diphosphate. In terms of biological role, DNA-dependent RNA polymerase catalyzes the transcription of DNA into RNA using the four ribonucleoside triphosphates as substrates. This chain is DNA-directed RNA polymerase subunit beta, found in Janthinobacterium sp. (strain Marseille) (Minibacterium massiliensis).